Here is a 177-residue protein sequence, read N- to C-terminus: ATP synthase subunit delta (177 aa).

Belongs to the ATPase delta chain family. F-type ATPases have 2 components, F(1) - the catalytic core - and F(0) - the membrane proton channel. F(1) has five subunits: alpha(3), beta(3), gamma(1), delta(1), epsilon(1). F(0) has three main subunits: a(1), b(2) and c(10-14). The alpha and beta chains form an alternating ring which encloses part of the gamma chain. F(1) is attached to F(0) by a central stalk formed by the gamma and epsilon chains, while a peripheral stalk is formed by the delta and b chains.

It is found in the cell membrane. F(1)F(0) ATP synthase produces ATP from ADP in the presence of a proton or sodium gradient. F-type ATPases consist of two structural domains, F(1) containing the extramembraneous catalytic core and F(0) containing the membrane proton channel, linked together by a central stalk and a peripheral stalk. During catalysis, ATP synthesis in the catalytic domain of F(1) is coupled via a rotary mechanism of the central stalk subunits to proton translocation. Functionally, this protein is part of the stalk that links CF(0) to CF(1). It either transmits conformational changes from CF(0) to CF(1) or is implicated in proton conduction. This is ATP synthase subunit delta from Streptococcus suis (strain 98HAH33).